The sequence spans 231 residues: MAEEKELVLLDFWVSPFGQRCRIAMAEKGLEFEYREEDLGNKSDLLLRSNPVHRKIPVLLHAGRPVSESLVILQYLDDAFPGTPHLLPPANSGDADAAYARATARFWADYVDRKLYDCGSRLWRLKGEPQAAAGREMAEILRTLEAELGDREFFGGGGGGRLGFVDVALVPFTAWFYSYERCGGFSVEEVAPRLAAWARRCGRIDSVVKHLPSPEKVYDFVGVLKKKYGVE.

The GST N-terminal domain maps to 5-84 (KELVLLDFWV…YLDDAFPGTP (80 aa)). Glutathione-binding positions include Ser-15, Lys-42, Ile-56, and 68 to 69 (ES). Residues 97-220 (AAYARATARF…LPSPEKVYDF (124 aa)) enclose the GST C-terminal domain.

The protein belongs to the GST superfamily. Tau family.

The enzyme catalyses RX + glutathione = an S-substituted glutathione + a halide anion + H(+). In terms of biological role, conjugation of reduced glutathione to a wide number of exogenous and endogenous hydrophobic electrophiles. This is Probable glutathione S-transferase GSTU1 (GSTU1) from Oryza sativa subsp. japonica (Rice).